The primary structure comprises 483 residues: Proline--tRNA ligase (483 aa).

The protein belongs to the class-II aminoacyl-tRNA synthetase family. ProS type 3 subfamily. In terms of assembly, homodimer.

It localises to the cytoplasm. It carries out the reaction tRNA(Pro) + L-proline + ATP = L-prolyl-tRNA(Pro) + AMP + diphosphate. Catalyzes the attachment of proline to tRNA(Pro) in a two-step reaction: proline is first activated by ATP to form Pro-AMP and then transferred to the acceptor end of tRNA(Pro). The chain is Proline--tRNA ligase from Mycoplasma pneumoniae (strain ATCC 29342 / M129 / Subtype 1) (Mycoplasmoides pneumoniae).